A 272-amino-acid chain; its full sequence is Glutamate racemase (272 aa).

Substrate is bound by residues 10 to 11 and 42 to 43; these read DS and YG. Residue cysteine 74 is the Proton donor/acceptor of the active site. Residue 75–76 coordinates substrate; that stretch reads NT. The Proton donor/acceptor role is filled by cysteine 185. Residue 186-187 coordinates substrate; the sequence is TH.

This sequence belongs to the aspartate/glutamate racemases family.

The catalysed reaction is L-glutamate = D-glutamate. Its pathway is cell wall biogenesis; peptidoglycan biosynthesis. Its function is as follows. Provides the (R)-glutamate required for cell wall biosynthesis. The sequence is that of Glutamate racemase from Bacillus velezensis (strain DSM 23117 / BGSC 10A6 / LMG 26770 / FZB42) (Bacillus amyloliquefaciens subsp. plantarum).